The following is a 104-amino-acid chain: Large ribosomal subunit protein bL21 (104 aa).

This sequence belongs to the bacterial ribosomal protein bL21 family. Part of the 50S ribosomal subunit. Contacts protein L20.

This protein binds to 23S rRNA in the presence of protein L20. The sequence is that of Large ribosomal subunit protein bL21 from Allorhizobium ampelinum (strain ATCC BAA-846 / DSM 112012 / S4) (Agrobacterium vitis (strain S4)).